The primary structure comprises 206 residues: MNGLFVSFEGVDGVGKTTQVERLRAYLEAQGRTVVVTREPGGTALGKAIRQLLLHGVDGGAVDIAPRAEALLFAADRAQHVAETIRPALERGEVVITDRYLDSSLAYQAGGRELTPEEIRSLSMWATNNLLPDRTYLLDMDPALSHHRLEHAEDRMESAGDDFQSRTRQAFLDLAAAEPNRFRVIDASQSIEAVWAAIESDIKELA.

Position 10-17 (10-17 (GVDGVGKT)) interacts with ATP.

It belongs to the thymidylate kinase family.

The enzyme catalyses dTMP + ATP = dTDP + ADP. Functionally, phosphorylation of dTMP to form dTDP in both de novo and salvage pathways of dTTP synthesis. The polypeptide is Thymidylate kinase (Bifidobacterium longum (strain NCC 2705)).